Reading from the N-terminus, the 350-residue chain is S-adenosylmethionine:tRNA ribosyltransferase-isomerase (350 aa).

The protein belongs to the QueA family. In terms of assembly, monomer.

It is found in the cytoplasm. It carries out the reaction 7-aminomethyl-7-carbaguanosine(34) in tRNA + S-adenosyl-L-methionine = epoxyqueuosine(34) in tRNA + adenine + L-methionine + 2 H(+). Its pathway is tRNA modification; tRNA-queuosine biosynthesis. Its function is as follows. Transfers and isomerizes the ribose moiety from AdoMet to the 7-aminomethyl group of 7-deazaguanine (preQ1-tRNA) to give epoxyqueuosine (oQ-tRNA). This is S-adenosylmethionine:tRNA ribosyltransferase-isomerase from Saccharophagus degradans (strain 2-40 / ATCC 43961 / DSM 17024).